The sequence spans 219 residues: Transmembrane protein 125 (219 aa).

4 consecutive transmembrane segments (helical) span residues 36 to 56 (LCFV…VALL), 68 to 88 (LATG…QLMS), 114 to 134 (ALVV…LAGL), and 147 to 167 (MLSV…GLLL).

It localises to the membrane. This is Transmembrane protein 125 (TMEM125) from Homo sapiens (Human).